The primary structure comprises 253 residues: Protein C1orf43 homolog (253 aa).

Residues 11-31 form a helical membrane-spanning segment; sequence VNVVLVMAYGSLVFVLLFIFV. Residues 194-213 form a disordered region; the sequence is SGSSQRQHQSAAKDLTQSPE.

The protein resides in the membrane. It is found in the golgi apparatus. It localises to the mitochondrion. Its function is as follows. General regulator of phagocytosis. Required to uptake Gram negative bacterium by macrophages. The sequence is that of Protein C1orf43 homolog from Bos taurus (Bovine).